Reading from the N-terminus, the 156-residue chain is Small ribosomal subunit protein uS7 (156 aa).

It belongs to the universal ribosomal protein uS7 family. As to quaternary structure, part of the 30S ribosomal subunit. Contacts proteins S9 and S11.

Its function is as follows. One of the primary rRNA binding proteins, it binds directly to 16S rRNA where it nucleates assembly of the head domain of the 30S subunit. Is located at the subunit interface close to the decoding center, probably blocks exit of the E-site tRNA. This chain is Small ribosomal subunit protein uS7, found in Rippkaea orientalis (strain PCC 8801 / RF-1) (Cyanothece sp. (strain PCC 8801)).